The chain runs to 343 residues: MTDDIVFENMVIDDTIVEEEDVEMKYYLKNKKEFEFLAKEMLSGKKILFITGAGLSINSGISAYRNTKTSVWSNFITEWGTRKKFEQDPAQFWNHFWLRTHEKQEYLDALPNSGHLAISNFVEYLGSNVITQNVDALHLKAKVPIEKLVEVHGRISLYKCITKGCRFEYDDTIDNIEIGDYSINGTTMKQGNLEITPPLCPECKKPILPQSLLFDENYSSHQFYNIEKAMDWIQEADIFIFIGTSFSVGITEEVICHAQSERKKMFNFNIFKETKISGLKSIVGKSEITLPLLERQLLYEAQKRNNGKKQIWYGNTIKRIVSENSMLLKEAMLKNDTKSSVKV.

Positions 27–300 (YLKNKKEFEF…PLLERQLLYE (274 aa)) constitute a Deacetylase sirtuin-type domain. H152 acts as the Proton acceptor in catalysis. Zn(2+) is bound by residues C160, C165, C200, and C203.

The protein belongs to the sirtuin family.

It is found in the nucleus. The catalysed reaction is N(6)-acetyl-L-lysyl-[protein] + NAD(+) + H2O = 2''-O-acetyl-ADP-D-ribose + nicotinamide + L-lysyl-[protein]. Its function is as follows. NAD-dependent deacetylase, which plays an important role in the regulation of transcriptional repression. May play a role in cell cycle. When overexpressed, the cell cycle is accelerated. The chain is NAD-dependent deacetylase sir2E (sir2E) from Dictyostelium discoideum (Social amoeba).